The chain runs to 89 residues: Omega-theraphotoxin-Ba1c (89 aa).

A signal peptide spans 1–23 (MRSLTLAAVLACSLLLVFHTSAA). Positions 24–50 (EEHEAQEGYLMNPGDTDTALATVDDER) are excised as a propeptide. Disulfide bonds link Cys54/Cys75, Cys58/Cys81, and Cys67/Cys86.

The protein belongs to the neurotoxin 12 (Hwtx-2) family. 06 (TXP1) subfamily. As to expression, expressed by the venom gland.

The protein resides in the secreted. In terms of biological role, inhibits voltage-gated calcium channels (Cav) in rat cerebellar granule cells. Has insecticidal activity. The polypeptide is Omega-theraphotoxin-Ba1c (Brachypelma albiceps (Mexican golden redrump tarantula)).